The chain runs to 803 residues: Volume-regulated anion channel subunit LRRC8C (803 aa).

Over methionine 1–proline 22 the chain is Cytoplasmic. The chain crosses the membrane as a helical span at residues tryptophan 23–valine 47. The Extracellular portion of the chain corresponds to methionine 48 to alanine 124. 2 disulfides stabilise this stretch: cysteine 54–cysteine 308 and cysteine 115–cysteine 293. N-linked (GlcNAc...) asparagine glycans are attached at residues asparagine 64 and asparagine 70. Residues lysine 125 to phenylalanine 144 form a helical membrane-spanning segment. The Cytoplasmic portion of the chain corresponds to tryptophan 145–tyrosine 262. The interval glutamate 177 to asparagine 209 is disordered. A compositionally biased stretch (polar residues) spans asparagine 191–asparagine 209. Phosphoserine is present on residues serine 212 and serine 215. Residues valine 263–valine 284 form a helical membrane-spanning segment. Residues serine 285–histidine 314 are Extracellular-facing. Residues leucine 315–tyrosine 339 form a helical membrane-spanning segment. The Cytoplasmic portion of the chain corresponds to tryptophan 340 to glutamate 803. LRR repeat units follow at residues glutamate 397 to threonine 420, asparagine 421 to isoleucine 443, leucine 446 to leucine 466, aspartate 467 to phenylalanine 488, lysine 490 to leucine 513, asparagine 515 to serine 537, leucine 541 to valine 563, serine 565 to lysine 587, methionine 588 to leucine 611, serine 613 to histidine 635, leucine 636 to leucine 659, threonine 660 to cysteine 682, lysine 684 to leucine 705, glutamine 706 to cysteine 728, lysine 730 to leucine 751, phenylalanine 753 to cysteine 774, and alanine 776 to glutamine 799.

It belongs to the LRRC8 family. In terms of assembly, heterohexamer; oligomerizes with other LRRC8 proteins (LRRC8A, LRRC8B, LRRC8D and/or LRRC8E) to form a heterohexamer. Homoheptamer; inactive, likely because it is not targeted to the plasma membrane in the absence of LRRC8A. In vivo, the subunit composition may depend primarily on expression levels, and heterooligomeric channels containing various proportions of the different LRRC8 proteins may coexist. As to expression, expressed at highest levels in skeletal muscle, and at moderate levels in heart, lung and peripheral blood leukocytes.

It localises to the cell membrane. It is found in the endoplasmic reticulum membrane. It catalyses the reaction chloride(in) = chloride(out). The catalysed reaction is iodide(out) = iodide(in). It carries out the reaction taurine(out) = taurine(in). The enzyme catalyses 2',3'-cGAMP(out) = 2',3'-cGAMP(in). Its function is as follows. Non-essential component of the volume-regulated anion channel (VRAC, also named VSOAC channel), an anion channel required to maintain a constant cell volume in response to extracellular or intracellular osmotic changes. The VRAC channel conducts iodide better than chloride and can also conduct organic osmolytes like taurine. Plays a redundant role in the efflux of amino acids, such as aspartate and glutamate, in response to osmotic stress. The VRAC channel also mediates transport of immunoreactive cyclic dinucleotide GMP-AMP (2'-3'-cGAMP), an immune messenger produced in response to DNA virus in the cytosol. Channel activity requires LRRC8A plus at least one other family member (LRRC8B, LRRC8C, LRRC8D or LRRC8E); channel characteristics depend on the precise subunit composition. This is Volume-regulated anion channel subunit LRRC8C from Homo sapiens (Human).